We begin with the raw amino-acid sequence, 92 residues long: uncharacterized protein (92 aa).

The N-terminal stretch at 1–23 (MNPAIVVIIVLLVAALLIWACKA) is a signal peptide.

This is an uncharacterized protein from Acheta domesticus (House cricket).